A 313-amino-acid chain; its full sequence is Aspartate carbamoyltransferase catalytic subunit (313 aa).

R53 and T54 together coordinate carbamoyl phosphate. K82 lines the L-aspartate pocket. Carbamoyl phosphate contacts are provided by R103, H131, and Q134. The L-aspartate site is built by R163 and R224. 2 residues coordinate carbamoyl phosphate: L263 and P264.

It belongs to the aspartate/ornithine carbamoyltransferase superfamily. ATCase family. In terms of assembly, heterooligomer of catalytic and regulatory chains.

It catalyses the reaction carbamoyl phosphate + L-aspartate = N-carbamoyl-L-aspartate + phosphate + H(+). It functions in the pathway pyrimidine metabolism; UMP biosynthesis via de novo pathway; (S)-dihydroorotate from bicarbonate: step 2/3. In terms of biological role, catalyzes the condensation of carbamoyl phosphate and aspartate to form carbamoyl aspartate and inorganic phosphate, the committed step in the de novo pyrimidine nucleotide biosynthesis pathway. The chain is Aspartate carbamoyltransferase catalytic subunit from Halorubrum lacusprofundi (strain ATCC 49239 / DSM 5036 / JCM 8891 / ACAM 34).